The following is a 158-amino-acid chain: F(420)H(2) dehydrogenase subunit C (158 aa).

The protein belongs to the complex I 30 kDa subunit family. As to quaternary structure, the FPO complex is composed of at least 13 different subunits.

Its subcellular location is the cell membrane. It carries out the reaction methanophenazine + reduced coenzyme F420-(gamma-L-Glu)(n) = dihydromethanophenazine + oxidized coenzyme F420-(gamma-L-Glu)(n) + H(+). Its function is as follows. Component of the F(420)H(2) dehydrogenase (FPO complex) which is part of the energy-conserving F(420)H(2):heterodisulfide oxidoreductase system. The membrane-bound electron transfer system of the complex plays an important role in the metabolism of methylotrophic methanogens when the organisms grow on methanol or methylamines. Catalyzes the oxidation of methanophenazine to dihydromethanophenazine. It shuttles electrons from F(420)H(2), via FAD and iron-sulfur (Fe-S) centers, to methanophenazine (an electron carrier in the membrane). It couples the redox reaction to proton translocation (for every two electrons transferred, two hydrogen ions are translocated across the cytoplasmic membrane), and thus conserves the redox energy in a proton gradient. It also catalyzes the oxidation of F(420)H(2) with quinones such as 2,3-dimethyl-1,4-naphthoquinone, 2-methyl-1,4-naphthoquinone and tetramethyl-p-benzoquinone. This is F(420)H(2) dehydrogenase subunit C (fpoC) from Methanosarcina mazei (strain ATCC BAA-159 / DSM 3647 / Goe1 / Go1 / JCM 11833 / OCM 88) (Methanosarcina frisia).